We begin with the raw amino-acid sequence, 295 residues long: Urease accessory protein UreD (295 aa).

The protein belongs to the UreD family. In terms of assembly, ureD, UreF and UreG form a complex that acts as a GTP-hydrolysis-dependent molecular chaperone, activating the urease apoprotein by helping to assemble the nickel containing metallocenter of UreC. The UreE protein probably delivers the nickel.

It localises to the cytoplasm. In terms of biological role, required for maturation of urease via the functional incorporation of the urease nickel metallocenter. The sequence is that of Urease accessory protein UreD from Ralstonia nicotianae (strain ATCC BAA-1114 / GMI1000) (Ralstonia solanacearum).